Reading from the N-terminus, the 156-residue chain is Large ribosomal subunit protein eL24 (156 aa).

A compositionally biased stretch (basic and acidic residues) spans 110–123 (RAAKEKQKQKELEK). The interval 110-156 (RAAKEKQKQKELEKKAKKVEKKKPTLAPKQKAAKITQKPAPRVGGKR) is disordered.

The protein belongs to the eukaryotic ribosomal protein eL24 family.

In Schistosoma japonicum (Blood fluke), this protein is Large ribosomal subunit protein eL24 (RPL24).